We begin with the raw amino-acid sequence, 625 residues long: tRNA uridine 5-carboxymethylaminomethyl modification enzyme MnmG (625 aa).

FAD contacts are provided by residues Gly16–Gly21, Ile128, and Ser183. Gly275 to Phe289 contacts NAD(+). Gln372 is an FAD binding site.

This sequence belongs to the MnmG family. In terms of assembly, homodimer. Heterotetramer of two MnmE and two MnmG subunits. Requires FAD as cofactor.

Its subcellular location is the cytoplasm. Functionally, NAD-binding protein involved in the addition of a carboxymethylaminomethyl (cmnm) group at the wobble position (U34) of certain tRNAs, forming tRNA-cmnm(5)s(2)U34. The protein is tRNA uridine 5-carboxymethylaminomethyl modification enzyme MnmG of Protochlamydia amoebophila (strain UWE25).